The primary structure comprises 463 residues: FAD-dependent monooxygenase nodM (463 aa).

The helical transmembrane segment at 5–25 threads the bilayer; that stretch reads EFKVIIVGGSLAGLTLAHCLL. Residues Glu-35, Gly-49, Arg-108, Asp-305, and Ala-318 each contribute to the FAD site. The chain crosses the membrane as a helical span at residues 438-458; sequence ILLGFTGVFTSALAMVVLLHI.

This sequence belongs to the paxM FAD-dependent monooxygenase family. FAD serves as cofactor.

Its subcellular location is the membrane. It functions in the pathway secondary metabolite biosynthesis. Its function is as follows. FAD-dependent monooxygenase; part of the gene cluster that mediates the biosynthesis of the indole diterpenes nodulisporic acids (NA). Nodulisporic acid A (NAA) and its chemically modified derivatives are of particular significance because of their highly potent insecticidal activity against blood-feeding arthropods and lack of observable adverse effects on mammals, in particular the tremogenicity associated with the paspaline-derived IDTs is not observed. The geranylgeranyl diphosphate (GGPP) synthase ggs1, localized outside of the cluster, is proposed to catalyze the first step in nodulisporic acid biosynthesis via conversion of farnesyl pyrophosphate and isopentyl pyrophosphate into geranylgeranyl pyrophosphate (GGPP). Condensation of indole-3-glycerol phosphate with GGPP by the prenyl transferase nodC then forms 3-geranylgeranylindole (3-GGI). Epoxidation by the FAD-dependent monooxygenase nodM leads to a single-epoxidized-GGI that is substrate of the terpene cyclase nodB for cyclization to yield emindole SB. The terminal methyl carbon, C28, of emindole SB is then oxidized by the cytochrome P450 monooxygenase nodW to produce nodulisporic acid F (NAF), the pentacyclic core of NAA. NAF is converted to nodulisporic acid E (NAE) via prenylation. This step is probably performed by one of the indole diterpene prenyltransferases nodD1 or nodD2. Several oxidation steps performed by the FAD-linked oxidoreductase nodO and one of the cytochrome P450 monooxygenase nodR, nodX or nodZ further convert NAE to nodulisporic acid D (NAD). NAD is substrate of cytochrome P450 monooxygenase nodJ to produce the precursor of nodulisporic acid C (NAC), converted to NAC by one of the indole diterpene prenyltransferases nodD1 or nodD2. The FAD-dependent monooxygenase nodY2 then oxidizes NAC to nodulisporic acid B (NAB). Finally NAB is converted to NAA by one of the cytochrome P450 monooxygenases nodR, nodX or nodZ. This chain is FAD-dependent monooxygenase nodM, found in Hypoxylon pulicicidum.